A 557-amino-acid polypeptide reads, in one-letter code: Dihydroxy-acid dehydratase (557 aa).

Cys-47 contacts [2Fe-2S] cluster. Asp-79 contacts Mg(2+). Position 120 (Cys-120) interacts with [2Fe-2S] cluster. Residues Asp-121 and Lys-122 each contribute to the Mg(2+) site. N6-carboxylysine is present on Lys-122. Cys-192 contributes to the [2Fe-2S] cluster binding site. Residue Glu-444 participates in Mg(2+) binding. Ser-470 serves as the catalytic Proton acceptor.

It belongs to the IlvD/Edd family. Homodimer. Requires [2Fe-2S] cluster as cofactor. Mg(2+) is required as a cofactor.

It catalyses the reaction (2R)-2,3-dihydroxy-3-methylbutanoate = 3-methyl-2-oxobutanoate + H2O. It carries out the reaction (2R,3R)-2,3-dihydroxy-3-methylpentanoate = (S)-3-methyl-2-oxopentanoate + H2O. Its pathway is amino-acid biosynthesis; L-isoleucine biosynthesis; L-isoleucine from 2-oxobutanoate: step 3/4. It functions in the pathway amino-acid biosynthesis; L-valine biosynthesis; L-valine from pyruvate: step 3/4. Functionally, functions in the biosynthesis of branched-chain amino acids. Catalyzes the dehydration of (2R,3R)-2,3-dihydroxy-3-methylpentanoate (2,3-dihydroxy-3-methylvalerate) into 2-oxo-3-methylpentanoate (2-oxo-3-methylvalerate) and of (2R)-2,3-dihydroxy-3-methylbutanoate (2,3-dihydroxyisovalerate) into 2-oxo-3-methylbutanoate (2-oxoisovalerate), the penultimate precursor to L-isoleucine and L-valine, respectively. This Parasynechococcus marenigrum (strain WH8102) protein is Dihydroxy-acid dehydratase.